The sequence spans 360 residues: MSIHHLARANVLALEPYLSARRLGGQGNIWLNANEYPLPPGYGLRGGNLNRYPACQPAGVINGYAAYAGVQPEQVVVCRGADEGIELLIRAFCEPGADAILFCPPTYGMYSVSAETFGIARRTVEARQDWQLDLQAIRARLDGVKLVYICSPNNPTGNLIDLETLRAMLEMTHGRALLVVDEAYIDFCPQASVVNWLAEYPHLVILRTLSKAFALAGLRCGFVLANVEVIQLLLKVIAPYPLALPVADIAEQALSDEGLRQMRTRVAEINTNRETLAHGLADCPCICAVYPSVSNYLLVRCDPAYRVFKTLWDQGTILRDQSKQPGLADCLRITIGTLAECQSVIAVLRALKPSSSKESL.

Lys211 carries the N6-(pyridoxal phosphate)lysine modification.

This sequence belongs to the class-II pyridoxal-phosphate-dependent aminotransferase family. Histidinol-phosphate aminotransferase subfamily. Homodimer. It depends on pyridoxal 5'-phosphate as a cofactor.

The enzyme catalyses L-histidinol phosphate + 2-oxoglutarate = 3-(imidazol-4-yl)-2-oxopropyl phosphate + L-glutamate. The protein operates within amino-acid biosynthesis; L-histidine biosynthesis; L-histidine from 5-phospho-alpha-D-ribose 1-diphosphate: step 7/9. In Sodalis glossinidius (strain morsitans), this protein is Histidinol-phosphate aminotransferase.